Reading from the N-terminus, the 233-residue chain is Small ribosomal subunit protein uS2 (233 aa).

This sequence belongs to the universal ribosomal protein uS2 family.

This Clostridium botulinum (strain Hall / ATCC 3502 / NCTC 13319 / Type A) protein is Small ribosomal subunit protein uS2.